The primary structure comprises 136 residues: Phospholipase A2 (136 aa).

Ca(2+) is bound by residues tryptophan 8, glycine 10, and glycine 12. Disulfide bonds link cysteine 9–cysteine 31, cysteine 30–cysteine 70, cysteine 37–cysteine 63, cysteine 61–cysteine 95, and cysteine 105–cysteine 117. Asparagine 16 carries an N-linked (GlcNAc...) asparagine glycan. The active site involves histidine 34. Ca(2+) is bound at residue aspartate 35. The active site involves aspartate 64.

This sequence belongs to the phospholipase A2 family. Requires Ca(2+) as cofactor. In terms of tissue distribution, expressed by the venom gland.

It is found in the secreted. It carries out the reaction a 1,2-diacyl-sn-glycero-3-phosphocholine + H2O = a 1-acyl-sn-glycero-3-phosphocholine + a fatty acid + H(+). Functionally, PLA2 catalyzes the calcium-dependent hydrolysis of the 2-acyl groups in 3-sn-phosphoglycerides. The protein is Phospholipase A2 of Bombus terrestris (Buff-tailed bumblebee).